Consider the following 351-residue polypeptide: Transmembrane protein 255A (351 aa).

The next 4 helical transmembrane spans lie at 30-50 (IYVT…GLAA), 57-77 (VTVG…LGII), 89-109 (LVAS…CAIV), and 226-246 (TILN…LGGF). Residues 302–331 (FPSSPPSGLSDEQEPQSPSPSPSYMWSSSA) are disordered.

Belongs to the TMEM255 family.

It is found in the membrane. The chain is Transmembrane protein 255A (Tmem255a) from Rattus norvegicus (Rat).